A 382-amino-acid chain; its full sequence is Proton extrusion protein PxcA (382 aa).

A run of 4 helical transmembrane segments spans residues 156 to 176 (TLIS…VQQI), 257 to 277 (AIKN…VCII), 305 to 325 (IILF…QVLL), and 340 to 360 (FILL…KYWI).

Belongs to the CemA family.

It is found in the cell inner membrane. Functionally, required for H(+) efflux immediately after light irradiation to form a rapid H(+) concentration gradient across the thylakoid membranes. Together with PxcL, contributes to transient H(+) uptake following dark to light transition. The polypeptide is Proton extrusion protein PxcA (Prochlorococcus marinus (strain MIT 9313)).